A 348-amino-acid chain; its full sequence is Uroporphyrinogen decarboxylase (348 aa).

Substrate-binding positions include 29–33 (RQAGR), D79, Y155, T210, and H326.

It belongs to the uroporphyrinogen decarboxylase family. Homodimer.

It localises to the cytoplasm. The catalysed reaction is uroporphyrinogen III + 4 H(+) = coproporphyrinogen III + 4 CO2. It participates in porphyrin-containing compound metabolism; protoporphyrin-IX biosynthesis; coproporphyrinogen-III from 5-aminolevulinate: step 4/4. In terms of biological role, catalyzes the decarboxylation of four acetate groups of uroporphyrinogen-III to yield coproporphyrinogen-III. This is Uroporphyrinogen decarboxylase from Rhodospirillum rubrum (strain ATCC 11170 / ATH 1.1.1 / DSM 467 / LMG 4362 / NCIMB 8255 / S1).